We begin with the raw amino-acid sequence, 237 residues long: Ribonuclease PH (237 aa).

Residues Arg-86 and 124–126 each bind phosphate; that span reads GTR.

The protein belongs to the RNase PH family. As to quaternary structure, homohexameric ring arranged as a trimer of dimers.

It catalyses the reaction tRNA(n+1) + phosphate = tRNA(n) + a ribonucleoside 5'-diphosphate. Its function is as follows. Phosphorolytic 3'-5' exoribonuclease that plays an important role in tRNA 3'-end maturation. Removes nucleotide residues following the 3'-CCA terminus of tRNAs; can also add nucleotides to the ends of RNA molecules by using nucleoside diphosphates as substrates, but this may not be physiologically important. Probably plays a role in initiation of 16S rRNA degradation (leading to ribosome degradation) during starvation. This Shewanella baltica (strain OS223) protein is Ribonuclease PH.